Here is a 193-residue protein sequence, read N- to C-terminus: Threonylcarbamoyl-AMP synthase (193 aa).

Residues serine 14 to arginine 193 form the YrdC-like domain.

Belongs to the SUA5 family. TsaC subfamily.

Its subcellular location is the cytoplasm. It carries out the reaction L-threonine + hydrogencarbonate + ATP = L-threonylcarbamoyladenylate + diphosphate + H2O. Required for the formation of a threonylcarbamoyl group on adenosine at position 37 (t(6)A37) in tRNAs that read codons beginning with adenine. Catalyzes the conversion of L-threonine, HCO(3)(-)/CO(2) and ATP to give threonylcarbamoyl-AMP (TC-AMP) as the acyladenylate intermediate, with the release of diphosphate. This Chromobacterium violaceum (strain ATCC 12472 / DSM 30191 / JCM 1249 / CCUG 213 / NBRC 12614 / NCIMB 9131 / NCTC 9757 / MK) protein is Threonylcarbamoyl-AMP synthase.